A 453-amino-acid polypeptide reads, in one-letter code: Omega-3 fatty acid desaturase, chloroplastic (453 aa).

The Histidine box-1 motif lies at 171 to 175 (HDCGH). The short motif at 207 to 211 (HRTHH) is the Histidine box-2 element. The Histidine box-3 motif lies at 374 to 378 (HVIHH).

The protein belongs to the fatty acid desaturase type 1 family.

The protein resides in the plastid. It localises to the chloroplast membrane. It functions in the pathway lipid metabolism; polyunsaturated fatty acid biosynthesis. Functionally, chloroplast omega-3 fatty acid desaturase introduces the third double bond in the biosynthesis of 16:3 and 18:3 fatty acids, important constituents of plant membranes. It is thought to use ferredoxin as an electron donor and to act on fatty acids esterified to galactolipids, sulfolipids and phosphatidylglycerol. The sequence is that of Omega-3 fatty acid desaturase, chloroplastic (FAD7) from Glycine max (Soybean).